The sequence spans 261 residues: Cytochrome c oxidase subunit 3 (261 aa).

At 1–15 the chain is on the mitochondrial matrix side; the sequence is MTHQTHAYHMVNPSP. Residues 16–34 form a helical membrane-spanning segment; sequence WPLTGALSALLMTSGLVMW. The Mitochondrial intermembrane portion of the chain corresponds to 35-40; sequence FHYNST. Residues 41-66 form a helical membrane-spanning segment; the sequence is LLLTLGLTTNLLTMYQWWRDIIREST. Over 67-72 the chain is Mitochondrial matrix; that stretch reads FQGHHT. Residues 73–105 traverse the membrane as a helical segment; it reads PAVQKGLRYGMILFIISEVFFFSGFFWAFYHSS. Residues 106-128 lie on the Mitochondrial intermembrane side of the membrane; sequence LAPTPELGGCWPPTGIHPLNPME. Residues 129–152 form a helical membrane-spanning segment; the sequence is VPLLNTSVLLASGVSITWAHHSLM. Topologically, residues 153 to 155 are mitochondrial matrix; sequence EGN. A helical transmembrane segment spans residues 156 to 183; sequence RKHMLQALFITISLGIYFTLLQASEYYE. At 184-190 the chain is on the mitochondrial intermembrane side; sequence APFTISD. The chain crosses the membrane as a helical span at residues 191–223; that stretch reads GVYGSTFFVATGFHGLHVIIGSTFLIVCFLRQL. Topologically, residues 224–232 are mitochondrial matrix; that stretch reads KFHFTSNHH. The helical transmembrane segment at 233-256 threads the bilayer; sequence FGFEAAAWYWHFVDVVWLFLYVSI. Residues 257–261 are Mitochondrial intermembrane-facing; that stretch reads YWWGS.

The protein belongs to the cytochrome c oxidase subunit 3 family. Component of the cytochrome c oxidase (complex IV, CIV), a multisubunit enzyme composed of 14 subunits. The complex is composed of a catalytic core of 3 subunits MT-CO1, MT-CO2 and MT-CO3, encoded in the mitochondrial DNA, and 11 supernumerary subunits COX4I, COX5A, COX5B, COX6A, COX6B, COX6C, COX7A, COX7B, COX7C, COX8 and NDUFA4, which are encoded in the nuclear genome. The complex exists as a monomer or a dimer and forms supercomplexes (SCs) in the inner mitochondrial membrane with NADH-ubiquinone oxidoreductase (complex I, CI) and ubiquinol-cytochrome c oxidoreductase (cytochrome b-c1 complex, complex III, CIII), resulting in different assemblies (supercomplex SCI(1)III(2)IV(1) and megacomplex MCI(2)III(2)IV(2)).

The protein localises to the mitochondrion inner membrane. The enzyme catalyses 4 Fe(II)-[cytochrome c] + O2 + 8 H(+)(in) = 4 Fe(III)-[cytochrome c] + 2 H2O + 4 H(+)(out). In terms of biological role, component of the cytochrome c oxidase, the last enzyme in the mitochondrial electron transport chain which drives oxidative phosphorylation. The respiratory chain contains 3 multisubunit complexes succinate dehydrogenase (complex II, CII), ubiquinol-cytochrome c oxidoreductase (cytochrome b-c1 complex, complex III, CIII) and cytochrome c oxidase (complex IV, CIV), that cooperate to transfer electrons derived from NADH and succinate to molecular oxygen, creating an electrochemical gradient over the inner membrane that drives transmembrane transport and the ATP synthase. Cytochrome c oxidase is the component of the respiratory chain that catalyzes the reduction of oxygen to water. Electrons originating from reduced cytochrome c in the intermembrane space (IMS) are transferred via the dinuclear copper A center (CU(A)) of subunit 2 and heme A of subunit 1 to the active site in subunit 1, a binuclear center (BNC) formed by heme A3 and copper B (CU(B)). The BNC reduces molecular oxygen to 2 water molecules using 4 electrons from cytochrome c in the IMS and 4 protons from the mitochondrial matrix. The sequence is that of Cytochrome c oxidase subunit 3 (MT-CO3) from Rhinoceros unicornis (Greater Indian rhinoceros).